Reading from the N-terminus, the 220-residue chain is Thiamine-phosphate synthase (220 aa).

4-amino-2-methyl-5-(diphosphooxymethyl)pyrimidine-binding positions include 38-42 and Asn-70; that span reads QYRDK. Residues Asp-71 and Asp-90 each contribute to the Mg(2+) site. 4-amino-2-methyl-5-(diphosphooxymethyl)pyrimidine is bound at residue Thr-109. 135-137 contacts 2-[(2R,5Z)-2-carboxy-4-methylthiazol-5(2H)-ylidene]ethyl phosphate; the sequence is TVS. Position 138 (Lys-138) interacts with 4-amino-2-methyl-5-(diphosphooxymethyl)pyrimidine. Residues Gly-171 and 191 to 192 each bind 2-[(2R,5Z)-2-carboxy-4-methylthiazol-5(2H)-ylidene]ethyl phosphate; that span reads IS.

This sequence belongs to the thiamine-phosphate synthase family. It depends on Mg(2+) as a cofactor.

The catalysed reaction is 2-[(2R,5Z)-2-carboxy-4-methylthiazol-5(2H)-ylidene]ethyl phosphate + 4-amino-2-methyl-5-(diphosphooxymethyl)pyrimidine + 2 H(+) = thiamine phosphate + CO2 + diphosphate. The enzyme catalyses 2-(2-carboxy-4-methylthiazol-5-yl)ethyl phosphate + 4-amino-2-methyl-5-(diphosphooxymethyl)pyrimidine + 2 H(+) = thiamine phosphate + CO2 + diphosphate. It carries out the reaction 4-methyl-5-(2-phosphooxyethyl)-thiazole + 4-amino-2-methyl-5-(diphosphooxymethyl)pyrimidine + H(+) = thiamine phosphate + diphosphate. It participates in cofactor biosynthesis; thiamine diphosphate biosynthesis; thiamine phosphate from 4-amino-2-methyl-5-diphosphomethylpyrimidine and 4-methyl-5-(2-phosphoethyl)-thiazole: step 1/1. In terms of biological role, condenses 4-methyl-5-(beta-hydroxyethyl)thiazole monophosphate (THZ-P) and 2-methyl-4-amino-5-hydroxymethyl pyrimidine pyrophosphate (HMP-PP) to form thiamine monophosphate (TMP). This Agrobacterium fabrum (strain C58 / ATCC 33970) (Agrobacterium tumefaciens (strain C58)) protein is Thiamine-phosphate synthase.